Consider the following 352-residue polypeptide: Biotin synthase (352 aa).

The 219-residue stretch at 44–262 (NRVQVSTLLS…LAVARILMPQ (219 aa)) folds into the Radical SAM core domain. [4Fe-4S] cluster is bound by residues Cys-59, Cys-63, and Cys-66. The [2Fe-2S] cluster site is built by Cys-103, Cys-134, Cys-194, and Arg-266.

It belongs to the radical SAM superfamily. Biotin synthase family. Homodimer. The cofactor is [4Fe-4S] cluster. [2Fe-2S] cluster is required as a cofactor.

The catalysed reaction is (4R,5S)-dethiobiotin + (sulfur carrier)-SH + 2 reduced [2Fe-2S]-[ferredoxin] + 2 S-adenosyl-L-methionine = (sulfur carrier)-H + biotin + 2 5'-deoxyadenosine + 2 L-methionine + 2 oxidized [2Fe-2S]-[ferredoxin]. It participates in cofactor biosynthesis; biotin biosynthesis; biotin from 7,8-diaminononanoate: step 2/2. Its function is as follows. Catalyzes the conversion of dethiobiotin (DTB) to biotin by the insertion of a sulfur atom into dethiobiotin via a radical-based mechanism. The protein is Biotin synthase of Pseudomonas syringae pv. tomato (strain ATCC BAA-871 / DC3000).